Consider the following 272-residue polypeptide: Lectin-like protein At1g53070 (272 aa).

The signal sequence occupies residues Met1–Ala23. The tract at residues Tyr24–Gln271 is legume-lectin like. Residues Asn33, Asn84, and Asn134 are each glycosylated (N-linked (GlcNAc...) asparagine). Ser241 bears the Phosphoserine mark.

This sequence belongs to the leguminous lectin family.

It localises to the secreted. It is found in the extracellular space. The protein localises to the apoplast. The sequence is that of Lectin-like protein At1g53070 from Arabidopsis thaliana (Mouse-ear cress).